The primary structure comprises 259 residues: Methionine aminopeptidase (259 aa).

H78 serves as a coordination point for substrate. 3 residues coordinate a divalent metal cation: D95, D106, and H169. H176 contributes to the substrate binding site. E202 lines the a divalent metal cation pocket. W220 is a substrate binding site. E234 provides a ligand contact to a divalent metal cation.

Belongs to the peptidase M24A family. Methionine aminopeptidase type 1 subfamily. Monomer. Co(2+) serves as cofactor. Zn(2+) is required as a cofactor. The cofactor is Mn(2+). Requires Fe(2+) as cofactor.

The catalysed reaction is Release of N-terminal amino acids, preferentially methionine, from peptides and arylamides.. Its function is as follows. Removes the N-terminal methionine from nascent proteins. The N-terminal methionine is often cleaved when the second residue in the primary sequence is small and uncharged (Met-Ala-, Cys, Gly, Pro, Ser, Thr, or Val). Requires deformylation of the N(alpha)-formylated initiator methionine before it can be hydrolyzed. The sequence is that of Methionine aminopeptidase from Rickettsia prowazekii (strain Madrid E).